A 188-amino-acid chain; its full sequence is Succinate dehydrogenase [ubiquinone] cytochrome b large subunit, mitochondrial (188 aa).

A mitochondrion-targeting transit peptide spans Met-1–Val-31. The Mitochondrial matrix segment spans residues Ser-32–Trp-69. The chain crosses the membrane as a helical span at residues Met-70–Val-95. Ser-72 and Arg-76 together coordinate a rhodoquinol. Ser-72 and Arg-76 together coordinate a ubiquinone. Residues Leu-96–Pro-113 are Mitochondrial intermembrane-facing. A helical transmembrane segment spans residues Trp-114–Gly-140. His-131 is a heme b binding site. Residues Phe-141–Tyr-153 are Mitochondrial matrix-facing. Residues Arg-154–Trp-176 form a helical membrane-spanning segment. The Mitochondrial intermembrane portion of the chain corresponds to Glu-177–His-188.

This sequence belongs to the cytochrome b558 family. Component of the mitochondrial electron transport chain complex II composed of four subunits: a flavoprotein (Fp), an iron-sulfur protein (Ip), and a large cytochrome b (CybL) subunit and a small cytochrome b (CybS) subunit. There are 2 developmental stage-specific forms of complex II which have the Ip and CybL subunits in common. Complex II from the free-living larvae (aerobic environment) acts as a succinate dehydrogenase and is composed of the common subunit Ip and CybL and the stage specific subunits FpL and CybSL. Complex II from parasitic larvae and adults (anaerobic environment) acts as a fumarate reductase and is composed of the common subunit Ip and CybL and the stage specific subunits FpA and CybSA. It depends on heme b as a cofactor. Expressed in adult muscles (at protein level).

It localises to the mitochondrion inner membrane. Its pathway is carbohydrate metabolism; tricarboxylic acid cycle; fumarate from succinate (eukaryal route): step 1/1. In terms of biological role, membrane-bound large subunit (CybL) of the mitochondrial electron transport chain complex II, which together with the membrane-bound small subunit (CybS), anchor the catalytic subunits to the inner mitochondria membrane. During the free-living egg-larvae stages, which occur in an aerobic environment, complex II acts as a succinate dehydrogenase by transferring electrons from succinate to ubiquinone. During the parasitic larvae and adult stages, which occur in an anaerobic environment, complex II acts as a fumarate reductase by transferring electrons from rhodoquinol to fumarate. The polypeptide is Succinate dehydrogenase [ubiquinone] cytochrome b large subunit, mitochondrial (Ascaris suum (Pig roundworm)).